A 238-amino-acid polypeptide reads, in one-letter code: Pyridoxine 5'-phosphate synthase (238 aa).

Residues N7 and R18 each coordinate 3-amino-2-oxopropyl phosphate. Catalysis depends on H43, which acts as the Proton acceptor. Residues R45 and H50 each coordinate 1-deoxy-D-xylulose 5-phosphate. Catalysis depends on E70, which acts as the Proton acceptor. T100 lines the 1-deoxy-D-xylulose 5-phosphate pocket. The active-site Proton donor is the H190. Residues D191 and 213 to 214 (GH) contribute to the 3-amino-2-oxopropyl phosphate site.

It belongs to the PNP synthase family. As to quaternary structure, homooctamer; tetramer of dimers.

The protein resides in the cytoplasm. It carries out the reaction 3-amino-2-oxopropyl phosphate + 1-deoxy-D-xylulose 5-phosphate = pyridoxine 5'-phosphate + phosphate + 2 H2O + H(+). The protein operates within cofactor biosynthesis; pyridoxine 5'-phosphate biosynthesis; pyridoxine 5'-phosphate from D-erythrose 4-phosphate: step 5/5. Functionally, catalyzes the complicated ring closure reaction between the two acyclic compounds 1-deoxy-D-xylulose-5-phosphate (DXP) and 3-amino-2-oxopropyl phosphate (1-amino-acetone-3-phosphate or AAP) to form pyridoxine 5'-phosphate (PNP) and inorganic phosphate. The chain is Pyridoxine 5'-phosphate synthase from Cytophaga hutchinsonii (strain ATCC 33406 / DSM 1761 / CIP 103989 / NBRC 15051 / NCIMB 9469 / D465).